Reading from the N-terminus, the 167-residue chain is NADH-ubiquinone oxidoreductase chain 4 (167 aa).

Helical transmembrane passes span 2–22 (FIGATTLMIAHGLTSSLLFCL), 44–64 (LLPLAATWWLLASLTNLALPP), and 86–106 (IILVGLNTLITALYSLYMLIM).

This sequence belongs to the complex I subunit 4 family.

It is found in the mitochondrion membrane. It carries out the reaction a ubiquinone + NADH + 5 H(+)(in) = a ubiquinol + NAD(+) + 4 H(+)(out). Core subunit of the mitochondrial membrane respiratory chain NADH dehydrogenase (Complex I) that is believed to belong to the minimal assembly required for catalysis. Complex I functions in the transfer of electrons from NADH to the respiratory chain. The immediate electron acceptor for the enzyme is believed to be ubiquinone. The polypeptide is NADH-ubiquinone oxidoreductase chain 4 (MT-ND4) (Carlito syrichta (Philippine tarsier)).